We begin with the raw amino-acid sequence, 333 residues long: MIELAERHSFKLPAQCRALIELKSSDDVEQLAFEEPYYLLGEGSNTLFVDDFYGTVICNRLLGVCIEEQESSYLITAAAGENWHNFVADLRARSIDGLENLALVPGSVGAAPVQNVGAYGVEVSTFIEQVTAWDIKEKCWVSMNKEACQFAYRDSVFKQHPGRWLITSVVFRLPKDWQPVTHYAPLNQLQGHVSAQKIFDTVVEVRQKKLPDPKVIPNAGSFFKNPVINKAQLDGLLQKWPDMVYFPVADNHVKVAAGWLIEHLGLKSAFVGDAAVNPHQALVLINKAQATGSDITQLALKIMKQVADASGIMLEPEVRLVGQHGLVQLAVEK.

The 165-residue stretch at 12–176 (LPAQCRALIE…TSVVFRLPKD (165 aa)) folds into the FAD-binding PCMH-type domain. Arginine 153 is a catalytic residue. The Proton donor role is filled by serine 221. Residue glutamate 317 is part of the active site.

This sequence belongs to the MurB family. FAD serves as cofactor.

Its subcellular location is the cytoplasm. It catalyses the reaction UDP-N-acetyl-alpha-D-muramate + NADP(+) = UDP-N-acetyl-3-O-(1-carboxyvinyl)-alpha-D-glucosamine + NADPH + H(+). It functions in the pathway cell wall biogenesis; peptidoglycan biosynthesis. Its function is as follows. Cell wall formation. In Idiomarina loihiensis (strain ATCC BAA-735 / DSM 15497 / L2-TR), this protein is UDP-N-acetylenolpyruvoylglucosamine reductase.